A 177-amino-acid polypeptide reads, in one-letter code: Large ribosomal subunit protein uL6 (177 aa).

The protein belongs to the universal ribosomal protein uL6 family. In terms of assembly, part of the 50S ribosomal subunit.

This protein binds to the 23S rRNA, and is important in its secondary structure. It is located near the subunit interface in the base of the L7/L12 stalk, and near the tRNA binding site of the peptidyltransferase center. The protein is Large ribosomal subunit protein uL6 of Pectobacterium atrosepticum (strain SCRI 1043 / ATCC BAA-672) (Erwinia carotovora subsp. atroseptica).